The following is a 539-amino-acid chain: Carotene epsilon-monooxygenase, chloroplastic (539 aa).

The transit peptide at 1–36 (MESSLFSPSSSSYSSLFTAKPTRLLSPKPKFTFSIR) directs the protein to the chloroplast. Heme is bound at residue Cys487.

The protein belongs to the cytochrome P450 family. The cofactor is heme.

It localises to the plastid. The protein localises to the chloroplast. The catalysed reaction is alpha-carotene + reduced [NADPH--hemoprotein reductase] + O2 = alpha-cryptoxanthin + oxidized [NADPH--hemoprotein reductase] + H2O + H(+). The enzyme catalyses zeinoxanthin + reduced [NADPH--hemoprotein reductase] + O2 = lutein + oxidized [NADPH--hemoprotein reductase] + H2O + H(+). Functionally, heme-containing cytochrome P450 involved in the biosynthesis of xanthophylls. Specific for epsilon- and beta-ring hydroxylation of alpha-carotene. Has only a low activity toward the beta-rings of beta-carotene. The preferred substrate in planta is not alpha-carotene but the epsilon-ring of zeinoxanthin. Possesses a major beta-carotene hydroxylase activity in planta when depleted in its preferred substrate alpha-carotene. The polypeptide is Carotene epsilon-monooxygenase, chloroplastic (CYP97C1) (Arabidopsis thaliana (Mouse-ear cress)).